The primary structure comprises 364 residues: MGSSFGDLFRISTFGESHGGGVGVIVEGCPPRLNLSVESIQAELDRRKPGQSHITTPRKEADQVQVLSGLLDGETTLGTPIAMVVRNKDQRPGDYKDMAVAFRPSHADATYQAKYGIQARSGGGRASARETIGRVAAGAIAKQLLKQAAGTEILAWVKRIHNIEASGIDPQRVQLSDVEANIVRCPESAVAERMVERIEAIGREGDSCGGVIECVVRHPAVGLGMPVFDKLEADLAKAVMSLPATKGFEIGSGFDGTLLKGSEHNDAFLPSDDGRLKTATNNSGGIQGGISNGEPIVIRVAFKPTATIRKEQQTIDSDGKATTLAGKGRHDPCVLPRAVPMVEAMVALVLADHLLRQQGQCSLW.

NADP(+) is bound at residue Arg47. Residues 125 to 127 (RAS), Gly288, 303 to 307 (KPTAT), and Arg329 each bind FMN.

The protein belongs to the chorismate synthase family. As to quaternary structure, homotetramer. It depends on FMNH2 as a cofactor.

It catalyses the reaction 5-O-(1-carboxyvinyl)-3-phosphoshikimate = chorismate + phosphate. The protein operates within metabolic intermediate biosynthesis; chorismate biosynthesis; chorismate from D-erythrose 4-phosphate and phosphoenolpyruvate: step 7/7. In terms of biological role, catalyzes the anti-1,4-elimination of the C-3 phosphate and the C-6 proR hydrogen from 5-enolpyruvylshikimate-3-phosphate (EPSP) to yield chorismate, which is the branch point compound that serves as the starting substrate for the three terminal pathways of aromatic amino acid biosynthesis. This reaction introduces a second double bond into the aromatic ring system. The chain is Chorismate synthase from Synechococcus sp. (strain CC9605).